The following is a 160-amino-acid chain: Dysbindin domain-containing protein 1 (160 aa).

Disordered stretches follow at residues 1 to 34 and 95 to 160; these read MESP…GDTC and ADSD…PKED. Serine 3, serine 97, and serine 121 each carry phosphoserine. The span at 127–143 shows a compositional bias: basic and acidic residues; the sequence is TRAEQNREKQTPSDPER.

Belongs to the dysbindin family.

This is Dysbindin domain-containing protein 1 (Dbndd1) from Rattus norvegicus (Rat).